The primary structure comprises 738 residues: Multifunctional procollagen lysine hydroxylase and glycosyltransferase LH3 (738 aa).

Residues 1 to 24 (MTSSGPGPRFLLLLPLLLPPAASA) form the signal peptide. The tract at residues 25–290 (SDRPRGRDPV…FCNQDRRTLP (266 aa)) is required for glycosyltransferase activity. Position 44-46 (44-46 (VAT)) interacts with UDP. The N-linked (GlcNAc...) asparagine glycan is linked to Asn63. Positions 112, 115, and 253 each coordinate Mn(2+). 112-114 (DSY) contributes to the UDP binding site. UDP is bound at residue 256–259 (GPTK). 2 cysteine pairs are disulfide-bonded: Cys279–Cys282 and Cys379–Cys385. Positions 295 to 520 (PPRVFLAVFV…EFGRLLATSR (226 aa)) are accessory region. Asn548 is a glycosylation site (N-linked (GlcNAc...) asparagine). Cysteines 563 and 698 form a disulfide. Positions 599 and 656 each coordinate 2-oxoglutarate. The region spanning 647–738 (RAVMNFVVRY…RYIMVSFVDP (92 aa)) is the Fe2OG dioxygenase domain. Fe cation-binding residues include His667 and Asp669. The tract at residues 672 to 715 (TFTLNVALNHKGLDYEGGGCRFLRYDCVISSPRKGWALLHPGRL) is important for dimerization. Asn676 provides a ligand contact to 2-oxoglutarate. A Fe cation-binding site is contributed by His719. Residue Arg729 coordinates 2-oxoglutarate.

Homodimer. The cofactor is Fe(2+). It depends on L-ascorbate as a cofactor. Mn(2+) is required as a cofactor.

The protein resides in the rough endoplasmic reticulum. Its subcellular location is the endoplasmic reticulum lumen. The protein localises to the endoplasmic reticulum membrane. It localises to the secreted. It is found in the extracellular space. It carries out the reaction L-lysyl-[collagen] + 2-oxoglutarate + O2 = (5R)-5-hydroxy-L-lysyl-[collagen] + succinate + CO2. It catalyses the reaction (5R)-5-hydroxy-L-lysyl-[collagen] + UDP-alpha-D-galactose = (5R)-5-O-(beta-D-galactosyl)-5-hydroxy-L-lysyl-[collagen] + UDP + H(+). The catalysed reaction is (5R)-5-O-(beta-D-galactosyl)-5-hydroxy-L-lysyl-[collagen] + UDP-alpha-D-glucose = (5R)-5-O-[alpha-D-glucosyl-(1-&gt;2)-beta-D-galactosyl]-5-hydroxy-L-lysyl-[collagen] + UDP + H(+). Its function is as follows. Multifunctional enzyme that catalyzes a series of post-translational modifications on Lys residues in procollagen. Plays a redundant role in catalyzing the formation of hydroxylysine residues in -Xaa-Lys-Gly- sequences in collagens. Plays a redundant role in catalyzing the transfer of galactose onto hydroxylysine groups, giving rise to galactosyl 5-hydroxylysine. Has an essential role by catalyzing the subsequent transfer of glucose moieties, giving rise to 1,2-glucosylgalactosyl-5-hydroxylysine residues. Catalyzes hydroxylation and glycosylation of Lys residues in the MBL1 collagen-like domain, giving rise to hydroxylysine and 1,2-glucosylgalactosyl-5-hydroxylysine residues. Catalyzes hydroxylation and glycosylation of Lys residues in the ADIPOQ collagen-like domain, giving rise to hydroxylysine and 1,2-glucosylgalactosyl-5-hydroxylysine residues. Essential for normal biosynthesis and secretion of type IV collagens. Essential for normal formation of basement membranes. This Pongo abelii (Sumatran orangutan) protein is Multifunctional procollagen lysine hydroxylase and glycosyltransferase LH3 (PLOD3).